The following is a 360-amino-acid chain: Actin-like protein MamK (360 aa).

Residues K22, 33 to 34 (TS), and D89 each bind ATP. E156 contacts Mg(2+). ATP is bound by residues 177–179 (AGT), 231–235 (KEQFS), and G302.

The protein belongs to the FtsA/MreB family. MamK subfamily. Forms cytoplasmic filaments. Interacts with MamJ. Forms filaments in the absence of other magnetosome proteins and in E.coli. Filament formation in vitro requires ATP, GTP or a non-hydrolyzable ATP analog.

Its subcellular location is the cytoplasm. It localises to the cytoskeleton. It carries out the reaction ATP + H2O = ADP + phosphate + H(+). With respect to regulation, filament dynamics depend partially on MamJ. Its function is as follows. Protein with ATPase activity which forms dynamic cytoplasmic filaments that are involved in sorting, concatenating and/or correctly positioning of magnetosomes in the cell. Not absolutely necessary for assembly of short chains. Filaments grow from the both cell poles towards midcell, and are probably disassembled at the other end of the cell, a process known as treadmilling. Polymerizes in the presence of ATP, GTP or a non-hydrolyzable ATP analog. Required for correct segregation and positioning of magnetosomes following cell division. This is Actin-like protein MamK from Magnetospirillum gryphiswaldense (strain DSM 6361 / JCM 21280 / NBRC 15271 / MSR-1).